The primary structure comprises 77 residues: UPF0349 protein lin2491 (77 aa).

It belongs to the UPF0349 family.

This Listeria innocua serovar 6a (strain ATCC BAA-680 / CLIP 11262) protein is UPF0349 protein lin2491.